A 126-amino-acid polypeptide reads, in one-letter code: Fluoride-specific ion channel FluC (126 aa).

Transmembrane regions (helical) follow at residues 3 to 23 (PYLL…RFLI), 37 to 57 (VGTL…ALYF), 68 to 88 (LVIT…LETV), and 101 to 121 (TNIT…MMLF). Na(+)-binding residues include Gly75 and Thr78.

This sequence belongs to the fluoride channel Fluc/FEX (TC 1.A.43) family.

It localises to the cell inner membrane. It catalyses the reaction fluoride(in) = fluoride(out). Its activity is regulated as follows. Na(+) is not transported, but it plays an essential structural role and its presence is essential for fluoride channel function. Its function is as follows. Fluoride-specific ion channel. Important for reducing fluoride concentration in the cell, thus reducing its toxicity. The sequence is that of Fluoride-specific ion channel FluC from Sulfurovum sp. (strain NBC37-1).